The sequence spans 91 residues: Small ribosomal subunit protein uS17 (91 aa).

The protein belongs to the universal ribosomal protein uS17 family. Part of the 30S ribosomal subunit.

One of the primary rRNA binding proteins, it binds specifically to the 5'-end of 16S ribosomal RNA. The polypeptide is Small ribosomal subunit protein uS17 (Salinispora arenicola (strain CNS-205)).